The chain runs to 120 residues: UPF0231 protein YE0706 (120 aa).

It belongs to the UPF0231 family.

The sequence is that of UPF0231 protein YE0706 from Yersinia enterocolitica serotype O:8 / biotype 1B (strain NCTC 13174 / 8081).